The chain runs to 313 residues: Urease accessory protein UreD (313 aa).

The segment at 1–30 (MTDLSFPGQAASPGEGAGQTPSGGSGHRFD) is disordered. Over residues 15 to 26 (EGAGQTPSGGSG) the composition is skewed to gly residues.

Belongs to the UreD family. In terms of assembly, ureD, UreF and UreG form a complex that acts as a GTP-hydrolysis-dependent molecular chaperone, activating the urease apoprotein by helping to assemble the nickel containing metallocenter of UreC. The UreE protein probably delivers the nickel.

The protein localises to the cytoplasm. Functionally, required for maturation of urease via the functional incorporation of the urease nickel metallocenter. The sequence is that of Urease accessory protein UreD from Chromohalobacter salexigens (strain ATCC BAA-138 / DSM 3043 / CIP 106854 / NCIMB 13768 / 1H11).